A 100-amino-acid chain; its full sequence is Small ribosomal subunit protein uS14c (100 aa).

It belongs to the universal ribosomal protein uS14 family. As to quaternary structure, part of the 30S ribosomal subunit.

The protein resides in the plastid. It is found in the chloroplast. Its function is as follows. Binds 16S rRNA, required for the assembly of 30S particles. The polypeptide is Small ribosomal subunit protein uS14c (Chlorokybus atmophyticus (Soil alga)).